A 115-amino-acid chain; its full sequence is Cytochrome c (115 aa).

The heme c site is built by C26, C29, H30, and M91.

Belongs to the cytochrome c family. Post-translationally, binds 1 heme c group covalently per subunit.

It is found in the mitochondrion intermembrane space. Functionally, electron carrier protein. The oxidized form of the cytochrome c heme group can accept an electron from the heme group of the cytochrome c1 subunit of cytochrome reductase. Cytochrome c then transfers this electron to the cytochrome oxidase complex, the final protein carrier in the mitochondrial electron-transport chain. The sequence is that of Cytochrome c from Theileria annulata.